Here is a 196-residue protein sequence, read N- to C-terminus: FMN-dependent NADH:quinone oxidoreductase (196 aa).

Ser-10 serves as a coordination point for FMN.

The protein belongs to the azoreductase type 1 family. As to quaternary structure, homodimer. The cofactor is FMN.

The enzyme catalyses 2 a quinone + NADH + H(+) = 2 a 1,4-benzosemiquinone + NAD(+). The catalysed reaction is N,N-dimethyl-1,4-phenylenediamine + anthranilate + 2 NAD(+) = 2-(4-dimethylaminophenyl)diazenylbenzoate + 2 NADH + 2 H(+). Its function is as follows. Quinone reductase that provides resistance to thiol-specific stress caused by electrophilic quinones. Also exhibits azoreductase activity. Catalyzes the reductive cleavage of the azo bond in aromatic azo compounds to the corresponding amines. This chain is FMN-dependent NADH:quinone oxidoreductase, found in Cereibacter sphaeroides (strain ATCC 17029 / ATH 2.4.9) (Rhodobacter sphaeroides).